A 263-amino-acid polypeptide reads, in one-letter code: 5'-nucleotidase SurE (263 aa).

The a divalent metal cation site is built by Asp15, Asp16, Ser46, and Asn102.

This sequence belongs to the SurE nucleotidase family. A divalent metal cation is required as a cofactor.

The protein localises to the cytoplasm. It catalyses the reaction a ribonucleoside 5'-phosphate + H2O = a ribonucleoside + phosphate. Functionally, nucleotidase that shows phosphatase activity on nucleoside 5'-monophosphates. The protein is 5'-nucleotidase SurE of Chlorobaculum tepidum (strain ATCC 49652 / DSM 12025 / NBRC 103806 / TLS) (Chlorobium tepidum).